Consider the following 417-residue polypeptide: Serine hydroxymethyltransferase (417 aa).

(6S)-5,6,7,8-tetrahydrofolate is bound by residues Leu121 and 125–127 (GHL). Lys229 is subject to N6-(pyridoxal phosphate)lysine. (6S)-5,6,7,8-tetrahydrofolate is bound at residue 355–357 (SPF).

It belongs to the SHMT family. Homodimer. It depends on pyridoxal 5'-phosphate as a cofactor.

It localises to the cytoplasm. The enzyme catalyses (6R)-5,10-methylene-5,6,7,8-tetrahydrofolate + glycine + H2O = (6S)-5,6,7,8-tetrahydrofolate + L-serine. It functions in the pathway one-carbon metabolism; tetrahydrofolate interconversion. Its pathway is amino-acid biosynthesis; glycine biosynthesis; glycine from L-serine: step 1/1. Catalyzes the reversible interconversion of serine and glycine with tetrahydrofolate (THF) serving as the one-carbon carrier. This reaction serves as the major source of one-carbon groups required for the biosynthesis of purines, thymidylate, methionine, and other important biomolecules. Also exhibits THF-independent aldolase activity toward beta-hydroxyamino acids, producing glycine and aldehydes, via a retro-aldol mechanism. This chain is Serine hydroxymethyltransferase, found in Klebsiella pneumoniae (strain 342).